A 1748-amino-acid chain; its full sequence is WD repeat-containing protein 90 (1748 aa).

The binds with microtubules stretch occupies residues 1-207 (MARAWQHPFL…VTPMPREMAF (207 aa)). The residue at position 241 (serine 241) is a Phosphoserine. The tract at residues 274–308 (QTPSPTASGRAALAPRPFPEVSLSQERSDASNADG) is disordered. WD repeat units follow at residues 407-450 (GHTD…CLFR), 452-494 (PMHV…LGGE), 501-541 (AHTD…LRSC), 615-654 (SSGP…VLLE), 656-695 (EHEG…YHML), 698-737 (SHTA…QLYD), 740-779 (SSED…VLVE), 782-821 (CHRG…WHVL), 882-922 (SRLD…IIRE), 926-964 (VHPE…SPGP), 969-1009 (GHSE…QSFP), 1156-1201 (GHSA…CQHL), 1204-1245 (PHST…LVSS), 1247-1286 (RLPE…ADIS), 1298-1326 (VGAG…VCVW), 1327-1376 (DTRA…ELRC), 1433-1472 (GHRS…LVIQ), 1475-1520 (VLNQ…MELK), 1523-1562 (PHPV…TFRV), 1568-1614 (GAPI…NHCE), and 1715-1748 (GHDN…VPGL). The disordered stretch occupies residues 1004 to 1071 (SDQSFPGAPP…GARDTRNSGA (68 aa)).

Belongs to the WD repeat WDR90/POC16 family.

It localises to the cytoplasm. The protein localises to the cytoskeleton. It is found in the microtubule organizing center. The protein resides in the centrosome. Its subcellular location is the centriole. It localises to the centriolar satellite. In terms of biological role, microtubule-binding protein that plays a crucial role in ensuring inner core protein localization within the centriole core, as well as in maintaining the microtubule wall integrity and the overall centriole roundness and stability. Required for efficient primary cilium formation. In Homo sapiens (Human), this protein is WD repeat-containing protein 90 (WDR90).